The chain runs to 155 residues: Endoribonuclease YbeY (155 aa).

Residues His-114, His-118, and His-124 each contribute to the Zn(2+) site.

The protein belongs to the endoribonuclease YbeY family. It depends on Zn(2+) as a cofactor.

It localises to the cytoplasm. Its function is as follows. Single strand-specific metallo-endoribonuclease involved in late-stage 70S ribosome quality control and in maturation of the 3' terminus of the 16S rRNA. The chain is Endoribonuclease YbeY from Salmonella arizonae (strain ATCC BAA-731 / CDC346-86 / RSK2980).